We begin with the raw amino-acid sequence, 141 residues long: MVRSQLPVAAPLRLLCALLLLPSATMIPGGLSPRSVTDPDVQEAAAFSVQEYNALSANAYYYKELRIVEAQSQVVSGAKYYLTMELMKTKCAKATSKPKVYKEIQNCELPPKAQQEKLTCHFQVWSRPWLEKMELTKMSCN.

A signal peptide spans 1–26 (MVRSQLPVAAPLRLLCALLLLPSATM). The region spanning 29–129 (GGLSPRSVTD…CHFQVWSRPW (101 aa)) is the Cystatin domain. The short motif at 73–77 (QVVSG) is the Secondary area of contact element. Cystine bridges form between Cys-91–Cys-107 and Cys-120–Cys-140.

This sequence belongs to the cystatin family. Expressed at a low level by the venom gland (at protein level).

The protein resides in the secreted. Functionally, inhibits various C1 cysteine proteases including cathepsin L, papain and cathepsin B. This protein has no toxic activity and its function in the venom is unknown. It may play a role as a housekeeping or regulatory protein. In Micropechis ikaheca (New Guinean small-eyed snake), this protein is Cystatin.